A 279-amino-acid chain; its full sequence is Orotidine 5'-phosphate decarboxylase (279 aa).

Residues Asp8, Lys30, 58–67, Thr117, Arg177, Gln186, Gly206, and Arg207 each bind substrate; that span reads DLKIHDIPNT. The Proton donor role is filled by Lys60.

The protein belongs to the OMP decarboxylase family. Type 1 subfamily. Homodimer.

It catalyses the reaction orotidine 5'-phosphate + H(+) = UMP + CO2. It functions in the pathway pyrimidine metabolism; UMP biosynthesis via de novo pathway; UMP from orotate: step 2/2. Its function is as follows. Catalyzes the decarboxylation of orotidine 5'-monophosphate (OMP) to uridine 5'-monophosphate (UMP). In Campylobacter jejuni (strain RM1221), this protein is Orotidine 5'-phosphate decarboxylase.